A 275-amino-acid polypeptide reads, in one-letter code: Dermonecrotic toxin SpeSicTox-betaIIA2iii (275 aa).

His-5 is a catalytic residue. Mg(2+) is bound by residues Glu-25 and Asp-27. His-41 (nucleophile) is an active-site residue. 2 disulfide bridges follow: Cys-45/Cys-51 and Cys-47/Cys-190. Asp-85 contributes to the Mg(2+) binding site.

This sequence belongs to the arthropod phospholipase D family. Class II subfamily. It depends on Mg(2+) as a cofactor. Expressed by the venom gland.

Its subcellular location is the secreted. The enzyme catalyses an N-(acyl)-sphingosylphosphocholine = an N-(acyl)-sphingosyl-1,3-cyclic phosphate + choline. It carries out the reaction an N-(acyl)-sphingosylphosphoethanolamine = an N-(acyl)-sphingosyl-1,3-cyclic phosphate + ethanolamine. It catalyses the reaction a 1-acyl-sn-glycero-3-phosphocholine = a 1-acyl-sn-glycero-2,3-cyclic phosphate + choline. The catalysed reaction is a 1-acyl-sn-glycero-3-phosphoethanolamine = a 1-acyl-sn-glycero-2,3-cyclic phosphate + ethanolamine. Its function is as follows. Dermonecrotic toxins cleave the phosphodiester linkage between the phosphate and headgroup of certain phospholipids (sphingolipid and lysolipid substrates), forming an alcohol (often choline) and a cyclic phosphate. This toxin acts on sphingomyelin (SM). It may also act on ceramide phosphoethanolamine (CPE), lysophosphatidylcholine (LPC) and lysophosphatidylethanolamine (LPE), but not on lysophosphatidylserine (LPS), and lysophosphatidylglycerol (LPG). It acts by transphosphatidylation, releasing exclusively cyclic phosphate products as second products. Induces dermonecrosis, hemolysis, increased vascular permeability, edema, inflammatory response, and platelet aggregation. This is Dermonecrotic toxin SpeSicTox-betaIIA2iii from Sicarius peruensis (Six-eyed sand spider).